A 154-amino-acid chain; its full sequence is Large ribosomal subunit protein uL15 (154 aa).

Positions Met-1 to Arg-13 are enriched in basic and acidic residues. The tract at residues Met-1–Gly-52 is disordered.

It belongs to the universal ribosomal protein uL15 family. As to quaternary structure, part of the 50S ribosomal subunit.

In terms of biological role, binds to the 23S rRNA. This chain is Large ribosomal subunit protein uL15, found in Deinococcus deserti (strain DSM 17065 / CIP 109153 / LMG 22923 / VCD115).